The sequence spans 232 residues: MKKVLFYVLPFAFFGCSATVDPQISMKPPAYVEELAPKQSNNVESAPGSLFGKGDNPLFSDKKAMNVNDLVTVIIQESTTQSTQANKATSRTNTSNLDGGTLTGSSGVVASALDKVNAYSNIGFQTNSSNNYTGTGSQSRNESFNTTISTRVIKILSNGNYFIEGSRELLINGEKQIIQLSGVIRPYDIGQDNTIDSKYIADAKILYKTEGEVDRSTRKPWGSKVIEAIWPF.

A signal peptide spans 1 to 15 (MKKVLFYVLPFAFFG). The N-palmitoyl cysteine moiety is linked to residue Cys-16. Cys-16 is lipidated: S-diacylglycerol cysteine.

Belongs to the FlgH family. The basal body constitutes a major portion of the flagellar organelle and consists of four rings (L,P,S, and M) mounted on a central rod.

It is found in the cell outer membrane. The protein resides in the bacterial flagellum basal body. Functionally, assembles around the rod to form the L-ring and probably protects the motor/basal body from shearing forces during rotation. This is Flagellar L-ring protein from Campylobacter jejuni subsp. doylei (strain ATCC BAA-1458 / RM4099 / 269.97).